Here is a 94-residue protein sequence, read N- to C-terminus: Co-chaperonin GroES (94 aa).

Belongs to the GroES chaperonin family. As to quaternary structure, heptamer of 7 subunits arranged in a ring. Interacts with the chaperonin GroEL.

It localises to the cytoplasm. Its function is as follows. Together with the chaperonin GroEL, plays an essential role in assisting protein folding. The GroEL-GroES system forms a nano-cage that allows encapsulation of the non-native substrate proteins and provides a physical environment optimized to promote and accelerate protein folding. GroES binds to the apical surface of the GroEL ring, thereby capping the opening of the GroEL channel. In Clostridium novyi (strain NT), this protein is Co-chaperonin GroES.